Consider the following 854-residue polypeptide: Nucleolar MIF4G domain-containing protein 1 homolog (854 aa).

Disordered stretches follow at residues 1–38 (MAKI…FAGK), 55–105 (QSQL…DAEV), 120–161 (PLGK…KQRI), and 217–306 (RKWE…RDAE). Residues 15 to 28 (TRKEQRKQKSEFKK) show a composition bias toward basic and acidic residues. Positions 60–71 (KNKKKKRSKKPK) are enriched in basic residues. Positions 88–105 (IDSDDDESIDSDFSDAEV) are enriched in acidic residues. Composition is skewed to basic and acidic residues over residues 135-156 (RQDE…ESKS) and 217-238 (RKWE…KEEA). The span at 242-289 (SDEEEDKEDRDEPMDNFSEDDSGSEGEDDDEDLTGEEEQSEEDSEQEE) shows a compositional bias: acidic residues. Positions 290 to 306 (NAPKIKEDIYGRKRDAE) are enriched in basic and acidic residues. An MIF4G domain is found at 352-553 (LKQCKGLLNR…DILNAVKNNN (202 aa)). The MI domain occupies 650–764 (AERRNIFCII…QLSVLKVVDF (115 aa)).

It belongs to the CWC22 family.

Its subcellular location is the nucleus. It is found in the nucleolus. In Drosophila melanogaster (Fruit fly), this protein is Nucleolar MIF4G domain-containing protein 1 homolog.